Here is a 757-residue protein sequence, read N- to C-terminus: Protein Lines homolog 1 (757 aa).

Ser635 carries the post-translational modification Phosphoserine.

Belongs to the protein lines family. As to expression, expressed in adult testis, prostate, prostate, spleen, thymus, skeletal muscle, fetal kidney and brain.

This Homo sapiens (Human) protein is Protein Lines homolog 1.